The following is a 200-amino-acid chain: Methylamine utilization protein MauD (200 aa).

A helical transmembrane segment spans residues 4-24; it reads FLIASNILLWLAFLGVTVVML. A Thioredoxin domain is found at 49-183; that stretch reads PDIGDAAPEF…LESLLEADRT (135 aa).

Its subcellular location is the membrane. The protein operates within one-carbon metabolism; methylamine degradation. Its function is as follows. May be specifically involved in the processing, transport, and/or maturation of the MADH beta-subunit. In Paracoccus denitrificans, this protein is Methylamine utilization protein MauD (mauD).